We begin with the raw amino-acid sequence, 368 residues long: Probable replication factor C subunit 5 (368 aa).

Residue 69-76 (GPPGTGKT) participates in ATP binding.

This sequence belongs to the activator 1 small subunits family. Heteropentamer of various rfc subunits that forms a complex (RFC) with PCNA in the presence of ATP.

It is found in the nucleus. The elongation of primed DNA templates by DNA polymerase delta and epsilon requires the action of the accessory proteins proliferating cell nuclear antigen (PCNA) and activator 1. In Caenorhabditis elegans, this protein is Probable replication factor C subunit 5.